The primary structure comprises 170 residues: Small ribosomal subunit protein uS9 (170 aa).

This sequence belongs to the universal ribosomal protein uS9 family.

This chain is Small ribosomal subunit protein uS9, found in Rhodococcus opacus (strain B4).